The chain runs to 64 residues: Temporin-ALe (64 aa).

Positions M1–C22 are cleaved as a signal peptide. Positions E23–F47 are excised as a propeptide. Leucine amide is present on L62.

In terms of tissue distribution, expressed by the skin glands.

The protein resides in the secreted. Functionally, antimicrobial peptide with activity against Gram-positive and Gram-negative bacteria and against fungi. Has been tested against S.aureus (MIC=1.25 ug/mL), B.pumilus (MIC=5.0 ug/mL), B.cereus (MIC=15.0 ug/mL), E.coli (MIC=1.25 ug/mL), B.dysenteriae (MIC=5.0 ug/mL), A.cacoaceticus (MIC=15.0 ug/mL), P.aeruginosa (MIC=5.0 ug/mL) and C.albicans (MIC=1.25 ug/mL). Also shows a weak hemolytic activity. This chain is Temporin-ALe, found in Amolops loloensis (Lolokou Sucker Frog).